The following is a 153-amino-acid chain: Regulatory protein RecX (153 aa).

This sequence belongs to the RecX family.

The protein localises to the cytoplasm. Its function is as follows. Modulates RecA activity. The chain is Regulatory protein RecX from Pseudomonas aeruginosa (strain UCBPP-PA14).